The following is a 501-amino-acid chain: Envelope glycoprotein C homolog (501 aa).

The signal sequence occupies residues 1-27 (MLTPRVLRALGWTGLFFLLLSPSNVLG). Over 28–465 (ASLSRDLETP…DATPAARGTP (438 aa)) the chain is Virion surface. An N-linked (GlcNAc...) asparagine; by host glycan is attached at Asn46. The tract at residues 53–86 (PLTEVPHAPSTESVSTNSESTNEHTITETTGKNA) is disordered. Over residues 62–72 (STESVSTNSES) the composition is skewed to low complexity. N-linked (GlcNAc...) asparagine; by host glycans are attached at residues Asn91, Asn100, Asn120, Asn212, Asn354, Asn400, and Asn429. Positions 258–356 (PASVDVLAPP…GDMISTTNAT (99 aa)) constitute an Ig-like domain. A helical membrane pass occupies residues 466–492 (MVITVTAVLGLAVILGMGIIMTALCLY). Residues 493 to 501 (NSTRKNIRL) lie on the Cytoplasmic side of the membrane.

It belongs to the herpesviridae glycoprotein C family.

It is found in the secreted. Its subcellular location is the host cell membrane. Functionally, may play an immunoevasive role in the pathogenesis of Marek's disease. It is a candidate for causing the early-stage immunosuppression that occurs after MDHV infection. The sequence is that of Envelope glycoprotein C homolog (gC) from Gallus gallus (Chicken).